The chain runs to 401 residues: Enoyl-[acyl-carrier-protein] reductase [NADH] (401 aa).

NAD(+) is bound by residues 48-53 (GASSGY), 74-75 (FE), 111-112 (DA), and 140-141 (LA). A substrate-binding site is contributed by Y226. The active-site Proton donor is the Y236. Residues K245 and 274–276 (VVT) each bind NAD(+).

Belongs to the TER reductase family. Monomer.

The catalysed reaction is a 2,3-saturated acyl-[ACP] + NAD(+) = a (2E)-enoyl-[ACP] + NADH + H(+). It participates in lipid metabolism; fatty acid biosynthesis. In terms of biological role, involved in the final reduction of the elongation cycle of fatty acid synthesis (FAS II). Catalyzes the reduction of a carbon-carbon double bond in an enoyl moiety that is covalently linked to an acyl carrier protein (ACP). The chain is Enoyl-[acyl-carrier-protein] reductase [NADH] from Xylella fastidiosa (strain Temecula1 / ATCC 700964).